Reading from the N-terminus, the 912-residue chain is Translation initiation factor IF-2 (912 aa).

A disordered region spans residues 185–204 (NATRPKRKTKEEKQKEREER). Residues 193–204 (TKEEKQKEREER) are compositionally biased toward basic and acidic residues. The tr-type G domain occupies 411 to 581 (LRPPIVTIMG…LLEAELLDLK (171 aa)). A G1 region spans residues 420-427 (GHVDHGKT). 420 to 427 (GHVDHGKT) provides a ligand contact to GTP. The segment at 445–449 (GITQH) is G2. Residues 467-470 (DTPG) form a G3 region. Residues 467 to 471 (DTPGH) and 521 to 524 (NKID) each bind GTP. Residues 521–524 (NKID) are G4. The interval 557–559 (SAK) is G5.

The protein belongs to the TRAFAC class translation factor GTPase superfamily. Classic translation factor GTPase family. IF-2 subfamily.

The protein localises to the cytoplasm. Functionally, one of the essential components for the initiation of protein synthesis. Protects formylmethionyl-tRNA from spontaneous hydrolysis and promotes its binding to the 30S ribosomal subunits. Also involved in the hydrolysis of GTP during the formation of the 70S ribosomal complex. The chain is Translation initiation factor IF-2 from Azobacteroides pseudotrichonymphae genomovar. CFP2.